Consider the following 324-residue polypeptide: Probable 6-phosphogluconolactonase 4, chloroplastic (324 aa).

The transit peptide at 1–63 (MSVSAAVAAA…PAMATDGAAA (63 aa)) directs the protein to the chloroplast. The disordered stretch occupies residues 19–43 (ARHRSPPASRVAATSRGRPFSSGPH).

It belongs to the glucosamine/galactosamine-6-phosphate isomerase family. 6-phosphogluconolactonase subfamily.

Its subcellular location is the plastid. The protein localises to the chloroplast. It catalyses the reaction 6-phospho-D-glucono-1,5-lactone + H2O = 6-phospho-D-gluconate + H(+). It participates in carbohydrate degradation; pentose phosphate pathway; D-ribulose 5-phosphate from D-glucose 6-phosphate (oxidative stage): step 2/3. Its function is as follows. Hydrolysis of 6-phosphogluconolactone to 6-phosphogluconate. This Oryza sativa subsp. japonica (Rice) protein is Probable 6-phosphogluconolactonase 4, chloroplastic.